Reading from the N-terminus, the 112-residue chain is uncharacterized protein (112 aa).

Residues Met-1–Leu-21 constitute a mitochondrion transit peptide.

It localises to the mitochondrion. This is an uncharacterized protein from Saccharomyces cerevisiae (strain ATCC 204508 / S288c) (Baker's yeast).